The primary structure comprises 319 residues: Type II methyltransferase M.RsrI (319 aa).

Residues M1–G10 show a composition bias toward basic residues. The segment at M1 to S32 is disordered.

It belongs to the N(4)/N(6)-methyltransferase family.

It catalyses the reaction a 2'-deoxyadenosine in DNA + S-adenosyl-L-methionine = an N(6)-methyl-2'-deoxyadenosine in DNA + S-adenosyl-L-homocysteine + H(+). Strongly inhibited by N-ethylmaleimide, inactivated by MgCl(2) or MgSO(4). Its function is as follows. A beta subtype methylase, recognizes the double-stranded sequence 5'-GAATTC-3', methylates A-3 on both strands, and protects the DNA from cleavage by the RsrI endonuclease. This chain is Type II methyltransferase M.RsrI, found in Cereibacter sphaeroides (Rhodobacter sphaeroides).